The primary structure comprises 200 residues: NADH-quinone oxidoreductase subunit C (200 aa).

Belongs to the complex I 30 kDa subunit family. In terms of assembly, NDH-1 is composed of 14 different subunits. Subunits NuoB, C, D, E, F, and G constitute the peripheral sector of the complex.

The protein resides in the cell inner membrane. It catalyses the reaction a quinone + NADH + 5 H(+)(in) = a quinol + NAD(+) + 4 H(+)(out). NDH-1 shuttles electrons from NADH, via FMN and iron-sulfur (Fe-S) centers, to quinones in the respiratory chain. The immediate electron acceptor for the enzyme in this species is believed to be ubiquinone. Couples the redox reaction to proton translocation (for every two electrons transferred, four hydrogen ions are translocated across the cytoplasmic membrane), and thus conserves the redox energy in a proton gradient. This Ralstonia pickettii (strain 12J) protein is NADH-quinone oxidoreductase subunit C.